The sequence spans 141 residues: Nucleoside diphosphate kinase (141 aa).

ATP contacts are provided by Lys10, Phe58, Arg86, Thr92, Arg103, and Asn113. The active-site Pros-phosphohistidine intermediate is the His116.

The protein belongs to the NDK family. As to quaternary structure, homotetramer. It depends on Mg(2+) as a cofactor.

The protein localises to the cytoplasm. The catalysed reaction is a 2'-deoxyribonucleoside 5'-diphosphate + ATP = a 2'-deoxyribonucleoside 5'-triphosphate + ADP. It carries out the reaction a ribonucleoside 5'-diphosphate + ATP = a ribonucleoside 5'-triphosphate + ADP. Functionally, major role in the synthesis of nucleoside triphosphates other than ATP. The ATP gamma phosphate is transferred to the NDP beta phosphate via a ping-pong mechanism, using a phosphorylated active-site intermediate. The protein is Nucleoside diphosphate kinase of Hydrogenovibrio crunogenus (strain DSM 25203 / XCL-2) (Thiomicrospira crunogena).